The chain runs to 454 residues: Ribosomal protein uS12 methylthiotransferase RimO (454 aa).

In terms of domain architecture, MTTase N-terminal spans 14–125 (SKVAFSHVGC…IAKVLDRVEK (112 aa)). [4Fe-4S] cluster contacts are provided by cysteine 23, cysteine 59, cysteine 88, cysteine 163, cysteine 167, and cysteine 170. Positions 149-378 (DKNKFVAYLR…ISVQQNISKD (230 aa)) constitute a Radical SAM core domain. Residues 381–452 (QSYVGSKMKI…EYDLYGETLK (72 aa)) form the TRAM domain.

It belongs to the methylthiotransferase family. RimO subfamily. [4Fe-4S] cluster serves as cofactor.

Its subcellular location is the cytoplasm. It catalyses the reaction L-aspartate(89)-[ribosomal protein uS12]-hydrogen + (sulfur carrier)-SH + AH2 + 2 S-adenosyl-L-methionine = 3-methylsulfanyl-L-aspartate(89)-[ribosomal protein uS12]-hydrogen + (sulfur carrier)-H + 5'-deoxyadenosine + L-methionine + A + S-adenosyl-L-homocysteine + 2 H(+). Functionally, catalyzes the methylthiolation of an aspartic acid residue of ribosomal protein uS12. The protein is Ribosomal protein uS12 methylthiotransferase RimO of Prochlorococcus marinus (strain MIT 9215).